Reading from the N-terminus, the 405-residue chain is CCA-adding enzyme (405 aa).

Residues G8 and R11 each contribute to the ATP site. CTP is bound by residues G8 and R11. The Mg(2+) site is built by E21 and D23. 3 residues coordinate ATP: R91, R137, and R140. CTP-binding residues include R91, R137, and R140. The HD domain occupies 220-326 (PLSHGLSTLS…LNFFDELDLW (107 aa)).

The protein belongs to the tRNA nucleotidyltransferase/poly(A) polymerase family. Bacterial CCA-adding enzyme type 2 subfamily. Requires Mg(2+) as cofactor.

The catalysed reaction is a tRNA precursor + 2 CTP + ATP = a tRNA with a 3' CCA end + 3 diphosphate. It catalyses the reaction a tRNA with a 3' CCA end + 2 CTP + ATP = a tRNA with a 3' CCACCA end + 3 diphosphate. Its function is as follows. Catalyzes the addition and repair of the essential 3'-terminal CCA sequence in tRNAs without using a nucleic acid template. Adds these three nucleotides in the order of C, C, and A to the tRNA nucleotide-73, using CTP and ATP as substrates and producing inorganic pyrophosphate. tRNA 3'-terminal CCA addition is required both for tRNA processing and repair. Also involved in tRNA surveillance by mediating tandem CCA addition to generate a CCACCA at the 3' terminus of unstable tRNAs. While stable tRNAs receive only 3'-terminal CCA, unstable tRNAs are marked with CCACCA and rapidly degraded. The polypeptide is CCA-adding enzyme (Hamiltonella defensa subsp. Acyrthosiphon pisum (strain 5AT)).